The chain runs to 260 residues: Transcription factor SUM-1 (260 aa).

The region spanning 112-163 is the bHLH domain; sequence DKRKAATLRERRRLRKVNEAFEALKRHTCANPNQRLPKVEILRNAIEYIEKL. The interval 171–208 is disordered; the sequence is KANGDSEMDSAETSSNTSDAMTDGSSPGSYSSDKAQQY. The segment covering 181–205 has biased composition (polar residues); it reads AETSSNTSDAMTDGSSPGSYSSDKA.

As to quaternary structure, efficient DNA binding requires dimerization with another bHLH protein. Homodimer, and heterodimer with the ubiquitous bHLH protein E12.

The protein localises to the nucleus. Its function is as follows. Regulatory factor during embryogenesis. Conversion of pluripotent secondary mesenchyme cells to myogenic cells. It binds to the MCK enhancer element. The polypeptide is Transcription factor SUM-1 (SUM-1) (Lytechinus variegatus (Green sea urchin)).